The chain runs to 462 residues: Protein MOS2 (462 aa).

Residues 1–10 show a composition bias toward low complexity; sequence MKLSFSLPSK. A disordered region spans residues 1–32; the sequence is MKLSFSLPSKSKPKVTATTADGNNAVDDGTSK. One can recognise a G-patch domain in the interval 156-202; it reads VDGFGAALMAGYGWKPGKGIGKNAKEDVEIKEYKKWTAKEGLGFDPD. Residues 231-258 form the KOW 1 domain; it reads VFFVGKEVRIIAGRDVGLKGKIVEKPGS. Residues 301-336 are compositionally biased toward basic and acidic residues; the sequence is DREKDKKTSGRGRGAERGSRSEVRASEKQDRGQTRE. Residues 301–340 form a disordered region; it reads DREKDKKTSGRGRGAERGSRSEVRASEKQDRGQTRERKVK. A KOW 2 domain is found at 401-428; sequence LPRRGGPVLVLSGKHKGVYGNLVEKDLD.

The protein belongs to the MOS2 family.

It is found in the nucleus. Functionally, required for innate and induced resistance to pathogens such as compatible and incompatible isolates of P.syringae and P.parasitica. The polypeptide is Protein MOS2 (MOS2) (Arabidopsis thaliana (Mouse-ear cress)).